A 316-amino-acid chain; its full sequence is MTVQTTTIGIVGARGHTGSELIKLVAAHPHLQLVFVSSRELAGQRVAEHNQAYQAELRYESLDANAVAAKAADVVILALPNGNAAPFVAAIDAATPQTLVIDLSTDYRFDPAWYYGLPELTRGSYAGQKRISNPGCYATAMQLTIAPLLDQLAGPPQCFGVSGYSGAGTTPSDKNNPALLADNLMPYALTNHMHEREVSAQLGVPVEFMPHVAPHFRGITLTVNLWLQQPLTREQIQARYTQRYADEPLIEIVDEAPWVSRIAGRHGVQIGGVTLAPGNKRVVVVATLDNLLKGAATQAMQNLNLALGWDELTAIG.

The active site involves C136.

The protein belongs to the NAGSA dehydrogenase family. Type 1 subfamily.

It localises to the cytoplasm. It catalyses the reaction N-acetyl-L-glutamate 5-semialdehyde + phosphate + NADP(+) = N-acetyl-L-glutamyl 5-phosphate + NADPH + H(+). The protein operates within amino-acid biosynthesis; L-arginine biosynthesis; N(2)-acetyl-L-ornithine from L-glutamate: step 3/4. Catalyzes the NADPH-dependent reduction of N-acetyl-5-glutamyl phosphate to yield N-acetyl-L-glutamate 5-semialdehyde. This chain is N-acetyl-gamma-glutamyl-phosphate reductase, found in Xanthomonas oryzae pv. oryzae (strain MAFF 311018).